Consider the following 176-residue polypeptide: ATP-dependent protease subunit HslV (176 aa).

Residue Thr2 is part of the active site. Residues Gly157, Cys160, and Thr163 each contribute to the Na(+) site.

Belongs to the peptidase T1B family. HslV subfamily. A double ring-shaped homohexamer of HslV is capped on each side by a ring-shaped HslU homohexamer. The assembly of the HslU/HslV complex is dependent on binding of ATP.

The protein localises to the cytoplasm. The catalysed reaction is ATP-dependent cleavage of peptide bonds with broad specificity.. Allosterically activated by HslU binding. In terms of biological role, protease subunit of a proteasome-like degradation complex believed to be a general protein degrading machinery. The polypeptide is ATP-dependent protease subunit HslV (Pseudomonas entomophila (strain L48)).